Consider the following 152-residue polypeptide: Protein NrdI (152 aa).

It belongs to the NrdI family.

Its function is as follows. Probably involved in ribonucleotide reductase function. This Mycobacterium sp. (strain JLS) protein is Protein NrdI.